A 417-amino-acid chain; its full sequence is Gamma-glutamyl phosphate reductase (417 aa).

It belongs to the gamma-glutamyl phosphate reductase family.

The protein localises to the cytoplasm. The enzyme catalyses L-glutamate 5-semialdehyde + phosphate + NADP(+) = L-glutamyl 5-phosphate + NADPH + H(+). The protein operates within amino-acid biosynthesis; L-proline biosynthesis; L-glutamate 5-semialdehyde from L-glutamate: step 2/2. In terms of biological role, catalyzes the NADPH-dependent reduction of L-glutamate 5-phosphate into L-glutamate 5-semialdehyde and phosphate. The product spontaneously undergoes cyclization to form 1-pyrroline-5-carboxylate. This chain is Gamma-glutamyl phosphate reductase, found in Polynucleobacter asymbioticus (strain DSM 18221 / CIP 109841 / QLW-P1DMWA-1) (Polynucleobacter necessarius subsp. asymbioticus).